We begin with the raw amino-acid sequence, 324 residues long: Methyltransferase pytC (324 aa).

The tract at residues 1 to 28 (MTVRTAAEPPNRIEVDMDAPSLDTDSSC) is disordered.

This sequence belongs to the methyltransferase superfamily. LaeA methyltransferase family.

It participates in secondary metabolite biosynthesis. Functionally, methyltransferase; part of the gene cluster that mediates the biosynthesis of pyranterreones, a family of antioxidative compounds. The first step of pyranonigrins biosynthesis is performed by the hybrid PKS-NRPS synthetase pytA that condenses 4 malonyl-CoA units ato the acetyl starter unit by the modular PKS of pytA. The acyl chain is then connected to an L-serine through the amide bond by the modular NRPS of pytA. A tetramic acid is formed and released from the PKS-NRPS pytA to give pyranterreone 5 with the help of the thioesterase pytI. Pyranterreone 5 could be methylated by pytC to afford pyranterreone 6. Both pyranterreones 5 and 6 are subsequently oxidized by the FAD-linked oxidoreductase pytB and the cytochrome P450 monooxygenase pytD to form the fused gamma-pyrone core, resulting in pyranterreones 7 and 11, respectively. The hydroxy group at C-8 of pyranterreones 7 and 11 are dehydrated by the aspartyl protease pytH to form a delta-7 double bond to give pyranterreones 3 and 1, 2 accordingly. The exo-methylene of pyranterreone 3 could be reduced into a pendant methyl by reductase pytE to provide pyranterreone 4, also known as cordylactam. Pyranterreone 4 can be reconverted to pyranterreone 3 through pytB-catalyzed dehydrogenation or further oxidized to pyranterreones 9 and 10. In Aspergillus terreus, this protein is Methyltransferase pytC.